The primary structure comprises 300 residues: Alpha-ketoglutarate-dependent dioxygenase alkB homolog 4 (300 aa).

At Ala-2 the chain carries N-acetylalanine. A Fe2OG dioxygenase domain is found at 148–272 (PVEQCNLDYS…RVCATFRELS (125 aa)). Positions 167, 169, and 252 each coordinate Fe cation. Arg-263 serves as a coordination point for 2-oxoglutarate.

The protein belongs to the alkB family. In terms of assembly, interacts with ZFHX3, MLLT3, MLLT1, HSF4, EP300, TES, EIF3C, MTMR6 and PSMA6. Fe(2+) serves as cofactor.

The protein localises to the cytoplasm. The protein resides in the nucleus. It is found in the nucleolus. It localises to the midbody. The catalysed reaction is an N(6)-methyl-2'-deoxyadenosine in DNA + 2-oxoglutarate + O2 = a 2'-deoxyadenosine in DNA + formaldehyde + succinate + CO2. It carries out the reaction N(6)-methyl-L-lysyl-[protein] + 2-oxoglutarate + O2 = L-lysyl-[protein] + formaldehyde + succinate + CO2. In terms of biological role, dioxygenase that mediates demethylation of actin monomethylated at 'Lys-84' (K84me1), thereby acting as a regulator of actomyosin-processes. Demethylation of actin K84me1 is required for maintaining actomyosin dynamics supporting normal cleavage furrow ingression during cytokinesis and cell migration. In addition to proteins, also demethylates DNA: specifically demethylates DNA methylated on the 6th position of adenine (N(6)-methyladenosine) DNA, thereby regulating Polycomb silencing. The protein is Alpha-ketoglutarate-dependent dioxygenase alkB homolog 4 of Mus musculus (Mouse).